Reading from the N-terminus, the 225-residue chain is tRNA (guanine-N(1)-)-methyltransferase (225 aa).

S-adenosyl-L-methionine contacts are provided by residues Gly112 and Ile132–Leu137.

It belongs to the RNA methyltransferase TrmD family. As to quaternary structure, homodimer.

It localises to the cytoplasm. It catalyses the reaction guanosine(37) in tRNA + S-adenosyl-L-methionine = N(1)-methylguanosine(37) in tRNA + S-adenosyl-L-homocysteine + H(+). Its function is as follows. Specifically methylates guanosine-37 in various tRNAs. The chain is tRNA (guanine-N(1)-)-methyltransferase from Bacteroides fragilis (strain ATCC 25285 / DSM 2151 / CCUG 4856 / JCM 11019 / LMG 10263 / NCTC 9343 / Onslow / VPI 2553 / EN-2).